A 237-amino-acid polypeptide reads, in one-letter code: Ribose-5-phosphate isomerase A (237 aa).

Substrate-binding positions include 32–35 (TGRT), 85–88 (DGAD), and 99–102 (KGGG). Glu-108 (proton acceptor) is an active-site residue. Residue Arg-126 coordinates substrate.

This sequence belongs to the ribose 5-phosphate isomerase family. As to quaternary structure, homodimer.

It catalyses the reaction aldehydo-D-ribose 5-phosphate = D-ribulose 5-phosphate. It participates in carbohydrate degradation; pentose phosphate pathway; D-ribose 5-phosphate from D-ribulose 5-phosphate (non-oxidative stage): step 1/1. Functionally, catalyzes the reversible conversion of ribose-5-phosphate to ribulose 5-phosphate. The chain is Ribose-5-phosphate isomerase A from Aeropyrum pernix (strain ATCC 700893 / DSM 11879 / JCM 9820 / NBRC 100138 / K1).